We begin with the raw amino-acid sequence, 630 residues long: Probable potassium transport system protein Kup (630 aa).

12 helical membrane-spanning segments follow: residues 17 to 37, 51 to 71, 105 to 125, 144 to 164, 175 to 195, 218 to 238, 255 to 275, 283 to 303, 344 to 364, 374 to 394, 402 to 422, and 428 to 448; these read LAIAAIGVVFGDIGTSPLYSL, PSAILGVISLLFWAIILVVGI, ITGLMMALGIFGACMFYGDAV, PQLSHLVLPITIVILIALFWI, LFGPIMVLWFVTIAALGIYHI, VLLAYVVLGSVVLVLTGAEAL, YVLVMPSLVLNYFGQGALLLL, PFFLLAPQWAALPLVVLSTVA, IYVPVVNWLLLFVILCIVIGF, YGIAVTATMVITTILAAVVMV, LLVAMIIGVFLVIDLGFFGAN, and QGGWLPLGIGALLFFLLMTWY.

Belongs to the HAK/KUP transporter (TC 2.A.72) family.

The protein resides in the cell inner membrane. The enzyme catalyses K(+)(in) + H(+)(in) = K(+)(out) + H(+)(out). Transport of potassium into the cell. Likely operates as a K(+):H(+) symporter. The sequence is that of Probable potassium transport system protein Kup from Burkholderia pseudomallei (strain 1710b).